The primary structure comprises 291 residues: tRNA dimethylallyltransferase (291 aa).

9 to 16 contacts ATP; that stretch reads GPTASGKT. 11–16 contacts substrate; it reads TASGKT. The interval 34–37 is interaction with substrate tRNA; that stretch reads DSLQ.

It belongs to the IPP transferase family. As to quaternary structure, monomer. It depends on Mg(2+) as a cofactor.

The enzyme catalyses adenosine(37) in tRNA + dimethylallyl diphosphate = N(6)-dimethylallyladenosine(37) in tRNA + diphosphate. Catalyzes the transfer of a dimethylallyl group onto the adenine at position 37 in tRNAs that read codons beginning with uridine, leading to the formation of N6-(dimethylallyl)adenosine (i(6)A). This is tRNA dimethylallyltransferase from Aster yellows witches'-broom phytoplasma (strain AYWB).